The primary structure comprises 142 residues: Large ribosomal subunit protein uL11 (142 aa).

The protein belongs to the universal ribosomal protein uL11 family. In terms of assembly, part of the ribosomal stalk of the 50S ribosomal subunit. Interacts with L10 and the large rRNA to form the base of the stalk. L10 forms an elongated spine to which L12 dimers bind in a sequential fashion forming a multimeric L10(L12)X complex. Post-translationally, one or more lysine residues are methylated.

Its function is as follows. Forms part of the ribosomal stalk which helps the ribosome interact with GTP-bound translation factors. This chain is Large ribosomal subunit protein uL11, found in Buchnera aphidicola subsp. Schizaphis graminum (strain Sg).